Reading from the N-terminus, the 30-residue chain is Cyclotide hyen-G (30 aa).

Residues 1 to 30 (GLPCGESCVYIPCISTVLGCSCSNKVCYRD) constitute a cross-link (cyclopeptide (Gly-Asp)). 3 cysteine pairs are disulfide-bonded: cysteine 4–cysteine 20, cysteine 8–cysteine 22, and cysteine 13–cysteine 27.

In terms of processing, this is a cyclic peptide. In terms of tissue distribution, detected in stems (at protein level).

Functionally, probably participates in a plant defense mechanism. In Pigea enneasperma (Spade flower), this protein is Cyclotide hyen-G.